Consider the following 163-residue polypeptide: Nucleotide-binding protein MS1759 (163 aa).

Belongs to the YajQ family.

Nucleotide-binding protein. The polypeptide is Nucleotide-binding protein MS1759 (Mannheimia succiniciproducens (strain KCTC 0769BP / MBEL55E)).